Consider the following 192-residue polypeptide: Peptidyl-tRNA hydrolase (192 aa).

Tyrosine 17 serves as a coordination point for tRNA. The active-site Proton acceptor is the histidine 22. The tRNA site is built by phenylalanine 68, asparagine 70, and asparagine 116.

Belongs to the PTH family. In terms of assembly, monomer.

It localises to the cytoplasm. It carries out the reaction an N-acyl-L-alpha-aminoacyl-tRNA + H2O = an N-acyl-L-amino acid + a tRNA + H(+). Functionally, hydrolyzes ribosome-free peptidyl-tRNAs (with 1 or more amino acids incorporated), which drop off the ribosome during protein synthesis, or as a result of ribosome stalling. Catalyzes the release of premature peptidyl moieties from peptidyl-tRNA molecules trapped in stalled 50S ribosomal subunits, and thus maintains levels of free tRNAs and 50S ribosomes. This is Peptidyl-tRNA hydrolase from Buchnera aphidicola subsp. Cinara cedri (strain Cc).